The sequence spans 739 residues: Exocyst complex component 3-like protein (739 aa).

Disordered stretches follow at residues 1 to 21 and 698 to 718; these read MDSKIQPTLRPGSSCPRPEWP and AALSSLQAGPPPSPSTGRRAL. The mediates interaction with EXOC2, EXOC4 and EXOC5 stretch occupies residues 1–370; the sequence is MDSKIQPTLR…DVSQLEPLLT (370 aa).

The protein belongs to the SEC6 family. As to quaternary structure, interacts with EXOC2, EXOC4 and EXOC5; may be part of the exocyst. As to expression, ubiquitously expressed.

It is found in the cytoplasmic vesicle. The protein localises to the secretory vesicle. In terms of biological role, as part of the exocyst, may play a role in regulated exocytosis of insulin granules. The polypeptide is Exocyst complex component 3-like protein (Exoc3l1) (Mus musculus (Mouse)).